A 440-amino-acid chain; its full sequence is Cytochrome c biogenesis protein Ccs1 (440 aa).

The next 3 membrane-spanning stretches (helical) occupy residues 25–45 (LQFSIILLLLIAIFSTIGTVI), 84–104 (TWWFLSLLFIFSLSLFTCSIS), and 170–190 (LAPIFVHGSIILLLTGSVLGL).

This sequence belongs to the Ccs1/CcsB family. May interact with CcsA.

The protein localises to the plastid. It localises to the chloroplast thylakoid membrane. In terms of biological role, required during biogenesis of c-type cytochromes (cytochrome c6 and cytochrome f) at the step of heme attachment. The chain is Cytochrome c biogenesis protein Ccs1 from Pyropia yezoensis (Susabi-nori).